A 1093-amino-acid chain; its full sequence is Mediator of RNA polymerase II transcription subunit 14 (1093 aa).

2 disordered regions span residues 1–61 (MPGV…KIDG) and 1035–1060 (TKSD…SQAA). Residues 19–31 (DTQTPSNGDNLRN) show a composition bias toward polar residues. Over residues 41 to 61 (KGDKDHDPDKESYTGKPKIDG) the composition is skewed to basic and acidic residues. The span at 1040 to 1056 (DYSTQPVPEKQSQTGAP) shows a compositional bias: polar residues.

Belongs to the Mediator complex subunit 14 family. In terms of assembly, component of the Mediator complex.

The protein resides in the nucleus. Its function is as follows. Component of the Mediator complex, a coactivator involved in the regulated transcription of nearly all RNA polymerase II-dependent genes. Mediator functions as a bridge to convey information from gene-specific regulatory proteins to the basal RNA polymerase II transcription machinery. Mediator is recruited to promoters by direct interactions with regulatory proteins and serves as a scaffold for the assembly of a functional preinitiation complex with RNA polymerase II and the general transcription factors. In Neosartorya fischeri (strain ATCC 1020 / DSM 3700 / CBS 544.65 / FGSC A1164 / JCM 1740 / NRRL 181 / WB 181) (Aspergillus fischerianus), this protein is Mediator of RNA polymerase II transcription subunit 14 (rgr1).